A 460-amino-acid polypeptide reads, in one-letter code: Bifunctional protein GlmU (460 aa).

Residues 1–232 are pyrophosphorylase; it reads MENVAAIILA…SDEIMGVNDR (232 aa). Residues 9-12, lysine 23, glutamine 75, and 80-81 each bind UDP-N-acetyl-alpha-D-glucosamine; these read LAAG and GT. Aspartate 105 serves as a coordination point for Mg(2+). 4 residues coordinate UDP-N-acetyl-alpha-D-glucosamine: glycine 142, glutamate 157, asparagine 172, and asparagine 230. Asparagine 230 lines the Mg(2+) pocket. The linker stretch occupies residues 233–253; that stretch reads AQLAQAARILRRRINRDLMLS. An N-acetyltransferase region spans residues 254–460; the sequence is GVSLVDPEQT…GWRIRMKKKT (207 aa). Arginine 336 and lysine 354 together coordinate UDP-N-acetyl-alpha-D-glucosamine. The Proton acceptor role is filled by histidine 366. Residues tyrosine 369 and asparagine 380 each contribute to the UDP-N-acetyl-alpha-D-glucosamine site. Acetyl-CoA is bound by residues 389–390, serine 408, alanine 426, and arginine 443; that span reads NY.

This sequence in the N-terminal section; belongs to the N-acetylglucosamine-1-phosphate uridyltransferase family. In the C-terminal section; belongs to the transferase hexapeptide repeat family. As to quaternary structure, homotrimer. It depends on Mg(2+) as a cofactor.

The protein localises to the cytoplasm. It carries out the reaction alpha-D-glucosamine 1-phosphate + acetyl-CoA = N-acetyl-alpha-D-glucosamine 1-phosphate + CoA + H(+). It catalyses the reaction N-acetyl-alpha-D-glucosamine 1-phosphate + UTP + H(+) = UDP-N-acetyl-alpha-D-glucosamine + diphosphate. It functions in the pathway nucleotide-sugar biosynthesis; UDP-N-acetyl-alpha-D-glucosamine biosynthesis; N-acetyl-alpha-D-glucosamine 1-phosphate from alpha-D-glucosamine 6-phosphate (route II): step 2/2. The protein operates within nucleotide-sugar biosynthesis; UDP-N-acetyl-alpha-D-glucosamine biosynthesis; UDP-N-acetyl-alpha-D-glucosamine from N-acetyl-alpha-D-glucosamine 1-phosphate: step 1/1. Its pathway is bacterial outer membrane biogenesis; LPS lipid A biosynthesis. Functionally, catalyzes the last two sequential reactions in the de novo biosynthetic pathway for UDP-N-acetylglucosamine (UDP-GlcNAc). The C-terminal domain catalyzes the transfer of acetyl group from acetyl coenzyme A to glucosamine-1-phosphate (GlcN-1-P) to produce N-acetylglucosamine-1-phosphate (GlcNAc-1-P), which is converted into UDP-GlcNAc by the transfer of uridine 5-monophosphate (from uridine 5-triphosphate), a reaction catalyzed by the N-terminal domain. The sequence is that of Bifunctional protein GlmU from Pelobacter propionicus (strain DSM 2379 / NBRC 103807 / OttBd1).